Here is a 419-residue protein sequence, read N- to C-terminus: O-antigen ligase (419 aa).

Topologically, residues 1–19 (MLTSFKLHSLKPYTLKSSM) are cytoplasmic. A helical membrane pass occupies residues 20 to 38 (ILEIITYILCFFSMIIAFV). The Periplasmic portion of the chain corresponds to 39–43 (DNTFS). The helical transmembrane segment at 44 to 61 (IKIYNITAIVCLLSLILR) threads the bilayer. Residues 62-71 (GRQENYNIKN) lie on the Cytoplasmic side of the membrane. A helical membrane pass occupies residues 72 to 91 (LILPLSIFLIGLLDLIWYSA). The Periplasmic segment spans residues 92–107 (FKVDNSPFRATYHSYL). Residues 108–125 (NTAKIFIFGSFIVFLTLT) form a helical membrane-spanning segment. Residues 126 to 134 (SQLKSKKES) lie on the Cytoplasmic side of the membrane. A helical membrane pass occupies residues 135–153 (VLYTLYSLSFLIAGYAMYI). Topologically, residues 154 to 167 (NSIHENDRISFGVG) are periplasmic. The helical transmembrane segment at 168–187 (TATGAAYSTMLIGIVSGVAI) threads the bilayer. At 188–194 (LYTKKNH) the chain is on the cytoplasmic side. Residues 195–211 (PFLFLLNSCAVLYVLAL) traverse the membrane as a helical segment. Topologically, residues 212 to 216 (TQTRA) are periplasmic. A helical transmembrane segment spans residues 217–234 (TLLLFPIICVAALIAYYN). Topologically, residues 235–240 (KSPKKF) are cytoplasmic. The helical transmembrane segment at 241–259 (TSSIVLLIAILASIVIIFN) threads the bilayer. Over 260 to 348 (KPIQNRYNEA…NEIIEAGSLK (89 aa)) the chain is Periplasmic. A helical membrane pass occupies residues 349-367 (GLMGIFSTLFLYFSLFYIA). At 368–372 (YKKRA) the chain is on the cytoplasmic side. Residues 373-391 (LGLLILTLGIVGIGLSDVI) form a helical membrane-spanning segment. Topologically, residues 392-396 (IWARS) are periplasmic. Residues 397-412 (IPIIIISAIVLLLVIN) traverse the membrane as a helical segment. At 413–419 (NRNNTIN) the chain is on the cytoplasmic side.

Homodimer.

The protein localises to the cell inner membrane. It carries out the reaction a lipid-linked O antigen + a lipid A-core oligosaccharide = a lipopolysaccharide + a polyisoprenyl diphosphate.. The protein operates within bacterial outer membrane biogenesis; lipopolysaccharide biosynthesis. Its activity is regulated as follows. Activity does not require ATP and magnesium ions. In terms of biological role, transferase involved in the biosynthesis of the lipopolysaccharide (LPS). In vitro, catalyzes the transfer of a polymerized O-antigen molecule from its polyprenyl diphosphate membrane anchor to a terminal sugar of the lipid A-core oligosaccharide, finalizing the biosynthesis of the lipopolysaccharide. The enzyme is functional and can be used to give diverse hybrid O-antigens in vitro, but K12 strains do not produce the O-antigen in vivo due to mutations in the rfb gene cluster. K12 strains are phenotypically rough, their lipopolysaccharide having a complete core structure, but no O-antigen. In highly mucoid K12 strains, WaaL can ligate colanic acid (CA or M-antigen) repeats to a significant proportion of lipopolysaccharide (LPS) core acceptor molecules, forming the LPS glycoform M(LPS). The attachment point was identified as O-7 of the L-glycero-D-manno-heptose of the outer LPS core, the same position used for O-antigen ligation. Cannot catalyze ATP hydrolysis in vitro. This is O-antigen ligase from Escherichia coli (strain K12).